A 295-amino-acid polypeptide reads, in one-letter code: Bifunctional protein FolD (295 aa).

Residues 166 to 168, S195, and I236 contribute to the NADP(+) site; that span reads GRS.

The protein belongs to the tetrahydrofolate dehydrogenase/cyclohydrolase family. In terms of assembly, homodimer.

The enzyme catalyses (6R)-5,10-methylene-5,6,7,8-tetrahydrofolate + NADP(+) = (6R)-5,10-methenyltetrahydrofolate + NADPH. The catalysed reaction is (6R)-5,10-methenyltetrahydrofolate + H2O = (6R)-10-formyltetrahydrofolate + H(+). The protein operates within one-carbon metabolism; tetrahydrofolate interconversion. In terms of biological role, catalyzes the oxidation of 5,10-methylenetetrahydrofolate to 5,10-methenyltetrahydrofolate and then the hydrolysis of 5,10-methenyltetrahydrofolate to 10-formyltetrahydrofolate. This Chlorobium luteolum (strain DSM 273 / BCRC 81028 / 2530) (Pelodictyon luteolum) protein is Bifunctional protein FolD.